The primary structure comprises 338 residues: UPF0252 protein PF1496 (338 aa).

A helical membrane pass occupies residues 100 to 120 (ILSMLFLVFILFPAFTSHIWS).

The protein belongs to the UPF0252 family.

The protein resides in the membrane. The chain is UPF0252 protein PF1496 from Pyrococcus furiosus (strain ATCC 43587 / DSM 3638 / JCM 8422 / Vc1).